We begin with the raw amino-acid sequence, 358 residues long: MFDRLQAVEDRYERLTELLSDPDIVNDSKKLREYSKEQSDIQETVDTYREYKNVKEQLVDTREMLDSEKDPDMHEMVKEEFNLLKAQQEELEERLRILLIPKDPNDNKNVIMEIRGAAGGDEANIFAGDLFRMYSRYAETQGWKIDIMEATPNPMGGYKEVIFMINGQGAYSKFKFENGAHRVQRVPATESQGRIHTSTATVACLPEVEEVDVEIHEKDIRVDTFASSGAGGQSVNTTMSAVRMTHLPTGVVVSMQDERSQIKNREKAMKILRARVADMYMQEAQKEIDATRKSAVGSGDRSERIRTYNYPQNRVTDHRIGLTIQKLDQIVEGRLDEIIDTLILEEQASKLERLNDDL.

At glutamine 233 the chain carries N5-methylglutamine.

The protein belongs to the prokaryotic/mitochondrial release factor family. In terms of processing, methylated by PrmC. Methylation increases the termination efficiency of RF1.

It is found in the cytoplasm. Functionally, peptide chain release factor 1 directs the termination of translation in response to the peptide chain termination codons UAG and UAA. The chain is Peptide chain release factor 1 from Lysinibacillus sphaericus (strain C3-41).